A 253-amino-acid chain; its full sequence is GTP cyclohydrolase III 2 (253 aa).

Positions L102–F125 are disordered.

The protein belongs to the archaeal-type GTP cyclohydrolase family.

It catalyses the reaction GTP + 3 H2O = 2-amino-5-formylamino-6-(5-phospho-D-ribosylamino)pyrimidin-4(3H)-one + 2 phosphate + 2 H(+). Functionally, catalyzes the formation of 2-amino-5-formylamino-6-ribofuranosylamino-4(3H)-pyrimidinone ribonucleotide monophosphate and inorganic phosphate from GTP. Also has an independent pyrophosphate phosphohydrolase activity. The polypeptide is GTP cyclohydrolase III 2 (gch32) (Halobacterium salinarum (strain ATCC 700922 / JCM 11081 / NRC-1) (Halobacterium halobium)).